We begin with the raw amino-acid sequence, 149 residues long: Large ribosomal subunit protein bL9 (149 aa).

Belongs to the bacterial ribosomal protein bL9 family.

Functionally, binds to the 23S rRNA. This chain is Large ribosomal subunit protein bL9, found in Helicobacter pylori (strain P12).